Consider the following 125-residue polypeptide: Small ribosomal subunit protein uS13 (125 aa).

This sequence belongs to the universal ribosomal protein uS13 family. As to quaternary structure, part of the 30S ribosomal subunit. Forms a loose heterodimer with protein S19. Forms two bridges to the 50S subunit in the 70S ribosome.

Functionally, located at the top of the head of the 30S subunit, it contacts several helices of the 16S rRNA. In the 70S ribosome it contacts the 23S rRNA (bridge B1a) and protein L5 of the 50S subunit (bridge B1b), connecting the 2 subunits; these bridges are implicated in subunit movement. Contacts the tRNAs in the A and P-sites. The sequence is that of Small ribosomal subunit protein uS13 from Rickettsia massiliae (strain Mtu5).